Consider the following 135-residue polypeptide: ATP synthase epsilon chain (135 aa).

This sequence belongs to the ATPase epsilon chain family. F-type ATPases have 2 components, CF(1) - the catalytic core - and CF(0) - the membrane proton channel. CF(1) has five subunits: alpha(3), beta(3), gamma(1), delta(1), epsilon(1). CF(0) has three main subunits: a, b and c.

The protein resides in the cell inner membrane. Functionally, produces ATP from ADP in the presence of a proton gradient across the membrane. This chain is ATP synthase epsilon chain, found in Rhizobium johnstonii (strain DSM 114642 / LMG 32736 / 3841) (Rhizobium leguminosarum bv. viciae).